The chain runs to 431 residues: Glutamate-1-semialdehyde 2,1-aminomutase (431 aa).

Lys269 carries the post-translational modification N6-(pyridoxal phosphate)lysine.

It belongs to the class-III pyridoxal-phosphate-dependent aminotransferase family. HemL subfamily. In terms of assembly, homodimer. Pyridoxal 5'-phosphate is required as a cofactor.

It is found in the cytoplasm. It catalyses the reaction (S)-4-amino-5-oxopentanoate = 5-aminolevulinate. It functions in the pathway porphyrin-containing compound metabolism; protoporphyrin-IX biosynthesis; 5-aminolevulinate from L-glutamyl-tRNA(Glu): step 2/2. It participates in porphyrin-containing compound metabolism; chlorophyll biosynthesis. The sequence is that of Glutamate-1-semialdehyde 2,1-aminomutase from Chlorobaculum parvum (strain DSM 263 / NCIMB 8327) (Chlorobium vibrioforme subsp. thiosulfatophilum).